Here is a 283-residue protein sequence, read N- to C-terminus: Putative F-box protein At1g60370 (283 aa).

Residues 4-53 (GEKLESIPIDLIIEIHSRLPAESVARFRCVSKLWGSMFRRPYFTELFLTR) form the F-box domain.

The polypeptide is Putative F-box protein At1g60370 (Arabidopsis thaliana (Mouse-ear cress)).